A 214-amino-acid polypeptide reads, in one-letter code: Outer-membrane lipoprotein LolB (214 aa).

The signal sequence occupies residues Met-1–Gly-25. Cys-26 is lipidated: N-palmitoyl cysteine. Cys-26 carries S-diacylglycerol cysteine lipidation.

This sequence belongs to the LolB family. Monomer.

The protein resides in the cell outer membrane. Plays a critical role in the incorporation of lipoproteins in the outer membrane after they are released by the LolA protein. This is Outer-membrane lipoprotein LolB from Shewanella oneidensis (strain ATCC 700550 / JCM 31522 / CIP 106686 / LMG 19005 / NCIMB 14063 / MR-1).